Here is a 276-residue protein sequence, read N- to C-terminus: Diaminopimelate epimerase (276 aa).

Substrate contacts are provided by Asn13, Gln46, and Asn66. Catalysis depends on Cys75, which acts as the Proton donor. Substrate-binding positions include 76-77, Asn159, Asn192, and 210-211; these read GN and ER. The Proton acceptor role is filled by Cys219. 220 to 221 contacts substrate; it reads GT.

It belongs to the diaminopimelate epimerase family. As to quaternary structure, homodimer.

It localises to the cytoplasm. The catalysed reaction is (2S,6S)-2,6-diaminopimelate = meso-2,6-diaminopimelate. Its pathway is amino-acid biosynthesis; L-lysine biosynthesis via DAP pathway; DL-2,6-diaminopimelate from LL-2,6-diaminopimelate: step 1/1. In terms of biological role, catalyzes the stereoinversion of LL-2,6-diaminopimelate (L,L-DAP) to meso-diaminopimelate (meso-DAP), a precursor of L-lysine and an essential component of the bacterial peptidoglycan. The chain is Diaminopimelate epimerase from Pseudomonas aeruginosa (strain LESB58).